A 237-amino-acid chain; its full sequence is MAVWLFGGRLGLRGRLSACRLLCPRFQSRGPQGGEDGDRLQPSSTAAKIPKIYTKTGDKGFSSTFTGERRPKDDQVFEAVGTTDELSSAIGFAMELVTEKGHMFAEELQKIQCMLQDVGSALATPRSSAREAHLKHTAFQEGPVLELERWIDKYSSQLPPLKAFILPSGGKSSSALHFCRAVCRRAERRVVPLVQMGETDANVAKFLNRLSDYLFTVARYAAMKEGSQEKIYKKHDV.

Residues 1-26 (MAVWLFGGRLGLRGRLSACRLLCPRF) constitute a mitochondrion transit peptide. A disordered region spans residues 30-49 (GPQGGEDGDRLQPSSTAAKI). Residues 54-57 (TKTG), 62-63 (SS), and K72 contribute to the ATP site. S128 is modified (phosphoserine). Residue 184-188 (RRAER) participates in ATP binding. K205 is modified (N6-succinyllysine). N208 serves as a coordination point for ATP. K224 is modified (N6-acetyllysine; alternate). K224 is subject to N6-succinyllysine; alternate.

It belongs to the Cob(I)alamin adenosyltransferase family. Homotrimer.

Its subcellular location is the mitochondrion. It carries out the reaction cob(I)alamin-[corrinoid adenosyltransferase] + ATP = apo-[corrinoid adenosyltransferase] + adenosylcob(III)alamin + triphosphate. In terms of biological role, converts cob(I)alamin to adenosylcobalamin (adenosylcob(III)alamin), a coenzyme for methylmalonyl-CoA mutase, therefore participates in the final step of the vitamin B12 conversion. Generates adenosylcobalamin (AdoCbl) and directly delivers the cofactor to MUT in a transfer that is stimulated by ATP-binding to MMAB and gated by MMAA. This is Corrinoid adenosyltransferase MMAB from Mus musculus (Mouse).